Reading from the N-terminus, the 387-residue chain is MAKRDYYEVLGLQKGASDDEIKRAFRKMAMKYHPDRNPGDKEAEENFKEVNEAYDVLKDPDKKAKYDQFGHAAFDGSGGFGGGGFGGFDAGGFDFSEMGGFGDIFESFFGGGFGGGSSRRRNAPQRGADLEYRLNITFEEAVFGCEKEISITRTENCETCHGTGAKAGTSPKTCPKCNGSGQIRVQRQTPLGSFVSTTTCDQCGGTGKVIEDPCPDCKGKGTVRKNRKITVKIPAGVDTGNIIPLRGQGEQGANNGPAGDLYIRVNVAPSKIFRREGSDIYYDYKISMAKAALGAEITVPTVDGNVKYKVPAGTQPGTKFRLKGKGVPHVNGGGRGNQYVHMVVEVPKHLNKEQEEALKAFMKASGESVDDIDEKDEGFFSKFKKKK.

The region spanning 5–70 (DYYEVLGLQK…DKKAKYDQFG (66 aa)) is the J domain. Residues 144–226 (GCEKEISITR…CKGKGTVRKN (83 aa)) form a CR-type zinc finger. Residues cysteine 157, cysteine 160, cysteine 174, cysteine 177, cysteine 200, cysteine 203, cysteine 214, and cysteine 217 each coordinate Zn(2+). CXXCXGXG motif repeat units lie at residues 157 to 164 (CETCHGTG), 174 to 181 (CPKCNGSG), 200 to 207 (CDQCGGTG), and 214 to 221 (CPDCKGKG).

It belongs to the DnaJ family. As to quaternary structure, homodimer. It depends on Zn(2+) as a cofactor.

The protein resides in the cytoplasm. Its function is as follows. Participates actively in the response to hyperosmotic and heat shock by preventing the aggregation of stress-denatured proteins and by disaggregating proteins, also in an autonomous, DnaK-independent fashion. Unfolded proteins bind initially to DnaJ; upon interaction with the DnaJ-bound protein, DnaK hydrolyzes its bound ATP, resulting in the formation of a stable complex. GrpE releases ADP from DnaK; ATP binding to DnaK triggers the release of the substrate protein, thus completing the reaction cycle. Several rounds of ATP-dependent interactions between DnaJ, DnaK and GrpE are required for fully efficient folding. Also involved, together with DnaK and GrpE, in the DNA replication of plasmids through activation of initiation proteins. The protein is Chaperone protein DnaJ of Clostridium perfringens (strain 13 / Type A).